The chain runs to 310 residues: Tyrosine recombinase XerC (310 aa).

In terms of domain architecture, Core-binding (CB) spans 11-97; that stretch reads NSLQKPLERF…SLRSFFDFLI (87 aa). The region spanning 118–298 is the Tyr recombinase domain; that stretch reads PLPKNLDVDE…DFQHLAQAYD (181 aa). Active-site residues include R157, K181, H250, R253, and H276. Y285 acts as the O-(3'-phospho-DNA)-tyrosine intermediate in catalysis.

Belongs to the 'phage' integrase family. XerC subfamily. In terms of assembly, forms a cyclic heterotetrameric complex composed of two molecules of XerC and two molecules of XerD.

The protein resides in the cytoplasm. Site-specific tyrosine recombinase, which acts by catalyzing the cutting and rejoining of the recombining DNA molecules. The XerC-XerD complex is essential to convert dimers of the bacterial chromosome into monomers to permit their segregation at cell division. It also contributes to the segregational stability of plasmids. The polypeptide is Tyrosine recombinase XerC (Vibrio parahaemolyticus serotype O3:K6 (strain RIMD 2210633)).